Reading from the N-terminus, the 354-residue chain is Selenide, water dikinase (354 aa).

C23 is a catalytic residue. ATP contacts are provided by residues K26 and 54–56 (TSD). Residue D57 participates in Mg(2+) binding. ATP contacts are provided by residues D74, D97, and 145 to 147 (GHS). Position 97 (D97) interacts with Mg(2+). D233 contributes to the Mg(2+) binding site.

It belongs to the selenophosphate synthase 1 family. Class I subfamily. In terms of assembly, homodimer. Mg(2+) is required as a cofactor.

It catalyses the reaction hydrogenselenide + ATP + H2O = selenophosphate + AMP + phosphate + 2 H(+). Functionally, synthesizes selenophosphate from selenide and ATP. This is Selenide, water dikinase from Burkholderia pseudomallei (strain K96243).